A 249-amino-acid polypeptide reads, in one-letter code: MVDRLANSEANTRRISIVENCFGAAGQPLTIPGRVLIGEGVLTKLCRKKPKARQFFLFNDILVYGNIVIQKKKYNKQHIIPLENVTIDSIKDEGDLRNGWLIKTPTKSFAVYAATATEKSEWMNHINKCVTDLLSKSGKTPSNEHAAVWVPDSEATVCMRCQKAKFTPVNRRHHCRKCGFVVCGPCSEKRFLLPSQSSKPVRICDFCYDLLSAGDMATCQPARSDSYSQSLKSPLNDMSDDDDDDDSSD.

Position 16 is a phosphoserine (Ser16). Residues 35-131 form the PH domain; that stretch reads VLIGEGVLTK…WMNHINKCVT (97 aa). Residue Lys44 is modified to N6-acetyllysine. The FYVE-type zinc-finger motif lies at 152–212; the sequence is DSEATVCMRC…ICDFCYDLLS (61 aa). 8 residues coordinate Zn(2+): Cys158, Cys161, Cys175, Cys178, Cys183, Cys186, Cys204, and Cys207. The span at 221 to 233 shows a compositional bias: polar residues; that stretch reads PARSDSYSQSLKS. Residues 221–249 are disordered; sequence PARSDSYSQSLKSPLNDMSDDDDDDDSSD. Acidic residues predominate over residues 238-249; it reads MSDDDDDDDSSD. Residues Ser239 and Ser248 each carry the phosphoserine modification.

In terms of assembly, may interact with EEA1. In terms of tissue distribution, expressed in placenta, ovary and small intestine, as well as in heart and pancreas. Also expressed in peripheral blood mononuclear cells and dendritic cells.

The protein localises to the early endosome membrane. Its subcellular location is the endoplasmic reticulum. Its function is as follows. May play a role in early endosome fusion upstream of RAB5, hence regulating receptor trafficking and fluid-phase transport. Enhances cellular sensitivity to TNF-induced apoptosis. The protein is Pleckstrin homology domain-containing family F member 2 (PLEKHF2) of Homo sapiens (Human).